Here is a 740-residue protein sequence, read N- to C-terminus: Isocitrate dehydrogenase [NADP] 2 (740 aa).

NADP(+) is bound by residues Asn83 and Ser85. D-threo-isocitrate is bound by residues Ser130, Asn133, Arg137, Arg143, and Lys253. Asn133 contacts NADP(+). Asp348 contributes to the Mg(2+) binding site. Tyr418 and Arg546 together coordinate D-threo-isocitrate. Positions 547 and 551 each coordinate Mg(2+). Residues Ser584, His588, Arg599, Asp601, and Arg648 each coordinate NADP(+).

It belongs to the monomeric-type IDH family. In terms of assembly, monomer. Requires Mg(2+) as cofactor. Mn(2+) serves as cofactor.

The enzyme catalyses D-threo-isocitrate + NADP(+) = 2-oxoglutarate + CO2 + NADPH. Its activity is regulated as follows. IDH activity is not significantly affected by monovalent cations. The combined addition of Mn(2+) and another divalent cation results in the decrease of the activity. Catalyzes the oxidative decarboxylation of isocitrate to 2-oxoglutarate and carbon dioxide with the concomitant reduction of NADP(+). Cannot use NAD(+). This is Isocitrate dehydrogenase [NADP] 2 from Psychrobacter sp. (strain 13A).